Here is a 449-residue protein sequence, read N- to C-terminus: Glycosyl hydrolase-like protein 1 (449 aa).

A beta-D-glucoside contacts are provided by residues Q22, H119, 164-165 (NE), Y292, E350, W393, and Y406. E165 functions as the Proton donor in the catalytic mechanism. Catalysis depends on E350, which acts as the Nucleophile.

This sequence belongs to the glycosyl hydrolase 1 family. In terms of tissue distribution, mainly expressed in flowers, flower buds and young leaves, and, to a lesser extent, in old leaves, stems and roots.

Its subcellular location is the cytoplasm. Its pathway is secondary metabolite biosynthesis; terpenoid biosynthesis. Its function is as follows. Component of the oleanane-type triterpene saponins (e.g. saponarioside A and saponarioside B) biosynthetic pathway, leading to the production of natural products with detergent properties used as traditional sources of soap. Beta-glycosidase that catalyzes the transfer of glucose moiety to QA-triFRXX to produce QA-triF(Q)RXX via the elongation of the C-28 sugar chain with a D-quinovose. This is Glycosyl hydrolase-like protein 1 from Saponaria officinalis (Common soapwort).